Consider the following 816-residue polypeptide: Sucrose synthase 2 (816 aa).

A GT-B glycosyltransferase region spans residues 280-757 (MVLNVVILSP…GLQRIEEKYT (478 aa)).

It belongs to the glycosyltransferase 1 family. Plant sucrose synthase subfamily. As to quaternary structure, forms homotetramers and heterotetramers with SS1, all three possible heterotetramers are formed. As to expression, abundant in developing endosperm, low in aleurone, and undetected in coleoptiles and roots. Also detected in crude extracts of anthers and in immature embryos.

The catalysed reaction is an NDP-alpha-D-glucose + D-fructose = a ribonucleoside 5'-diphosphate + sucrose + H(+). Its function is as follows. Sucrose-cleaving enzyme that provides UDP-glucose and fructose for various metabolic pathways. This Hordeum vulgare (Barley) protein is Sucrose synthase 2 (SS2).